A 509-amino-acid polypeptide reads, in one-letter code: O-acetyltransferase anaAT (509 aa).

It belongs to the fumigaclavine B O-acetyltransferase family. In terms of assembly, monomer.

The catalysed reaction is (2R,3S,11R)-aszonalenin + acetyl-CoA = (2R,3S,11R)-acetylaszonalenin + CoA. It functions in the pathway alkaloid biosynthesis. Its function is as follows. O-acetyltransferase; part of the gene cluster that mediates the biosynthesis of the prenylated pyrroloindoline diketopiperazine acetylaszonalenin. The first step in the pathway is the formation of (R)-benzodiazepinedione by condensation of tryptophan and anthranilic acid catalyzed by the non-ribosomal peptide synthetase anaPS. The prenyltransferase anaPT then converts (R)-benzodiazepinedione to aszonalenin in the presence of dimethylallyl diphosphate (DMAPP) via C3-prenylation. The last step in the biosynthesis of acetylaszonalenin via acetylation of aszonalenin at position N1 catalyzed by anaAT. The chain is O-acetyltransferase anaAT from Neosartorya fischeri (strain ATCC 1020 / DSM 3700 / CBS 544.65 / FGSC A1164 / JCM 1740 / NRRL 181 / WB 181) (Aspergillus fischerianus).